The sequence spans 425 residues: Dual-specificity RNA methyltransferase RlmN (425 aa).

Catalysis depends on Glu136, which acts as the Proton acceptor. A Radical SAM core domain is found at 142 to 389 (GDDRGTLCVS…VRTPRGRDIL (248 aa)). Cysteines 149 and 392 form a disulfide. [4Fe-4S] cluster contacts are provided by Cys156, Cys160, and Cys163. S-adenosyl-L-methionine is bound by residues 218–219 (GE), Ser250, 272–274 (SLH), and Asn349. Cys392 acts as the S-methylcysteine intermediate in catalysis.

This sequence belongs to the radical SAM superfamily. RlmN family. [4Fe-4S] cluster serves as cofactor.

The protein localises to the cytoplasm. The catalysed reaction is adenosine(2503) in 23S rRNA + 2 reduced [2Fe-2S]-[ferredoxin] + 2 S-adenosyl-L-methionine = 2-methyladenosine(2503) in 23S rRNA + 5'-deoxyadenosine + L-methionine + 2 oxidized [2Fe-2S]-[ferredoxin] + S-adenosyl-L-homocysteine. It catalyses the reaction adenosine(37) in tRNA + 2 reduced [2Fe-2S]-[ferredoxin] + 2 S-adenosyl-L-methionine = 2-methyladenosine(37) in tRNA + 5'-deoxyadenosine + L-methionine + 2 oxidized [2Fe-2S]-[ferredoxin] + S-adenosyl-L-homocysteine. Functionally, specifically methylates position 2 of adenine 2503 in 23S rRNA and position 2 of adenine 37 in tRNAs. m2A2503 modification seems to play a crucial role in the proofreading step occurring at the peptidyl transferase center and thus would serve to optimize ribosomal fidelity. This Methylorubrum populi (strain ATCC BAA-705 / NCIMB 13946 / BJ001) (Methylobacterium populi) protein is Dual-specificity RNA methyltransferase RlmN.